The following is a 92-amino-acid chain: Small ribosomal subunit protein uS19 (92 aa).

The protein belongs to the universal ribosomal protein uS19 family.

Protein S19 forms a complex with S13 that binds strongly to the 16S ribosomal RNA. This chain is Small ribosomal subunit protein uS19, found in Tolumonas auensis (strain DSM 9187 / NBRC 110442 / TA 4).